Consider the following 216-residue polypeptide: Translation initiation factor 6 (216 aa).

It belongs to the eIF-6 family.

Functionally, binds to the 50S ribosomal subunit and prevents its association with the 30S ribosomal subunit to form the 70S initiation complex. This Thermoplasma acidophilum (strain ATCC 25905 / DSM 1728 / JCM 9062 / NBRC 15155 / AMRC-C165) protein is Translation initiation factor 6.